The following is a 129-amino-acid chain: Small ribosomal subunit protein uS11 (129 aa).

The protein belongs to the universal ribosomal protein uS11 family. Part of the 30S ribosomal subunit. Interacts with proteins S7 and S18. Binds to IF-3.

In terms of biological role, located on the platform of the 30S subunit, it bridges several disparate RNA helices of the 16S rRNA. Forms part of the Shine-Dalgarno cleft in the 70S ribosome. The sequence is that of Small ribosomal subunit protein uS11 from Yersinia pseudotuberculosis serotype O:1b (strain IP 31758).